The sequence spans 507 residues: 2,3-bisphosphoglycerate-independent phosphoglycerate mutase (507 aa).

Residues D13 and S63 each contribute to the Mn(2+) site. Catalysis depends on S63, which acts as the Phosphoserine intermediate. Residues H124, 153–154 (RD), R183, R189, 254–257 (RADR), and K330 each bind substrate. Mn(2+) contacts are provided by D396, H400, D437, H438, and H456.

This sequence belongs to the BPG-independent phosphoglycerate mutase family. Monomer. Mn(2+) serves as cofactor.

It carries out the reaction (2R)-2-phosphoglycerate = (2R)-3-phosphoglycerate. The protein operates within carbohydrate degradation; glycolysis; pyruvate from D-glyceraldehyde 3-phosphate: step 3/5. Functionally, catalyzes the interconversion of 2-phosphoglycerate and 3-phosphoglycerate. The sequence is that of 2,3-bisphosphoglycerate-independent phosphoglycerate mutase from Paracoccus denitrificans (strain Pd 1222).